The following is a 216-amino-acid chain: MSKLQSEVLKEAISQVVGESKEKGRKFTETVELQIGLKNYDPQKDKRFSGSVKLPHIPRPKMKVCMLGDAQHVEEAEKIGLDYMDVEALKKMNKNKKLVKKLAKKYHAFLASEAIIKQIPRLLGPGLNKAGKFPTLVTHQESLESKVNETKATVKFQLKKVLCMGVAVGNLSMEEKQIQQNIQMSVNFLVSLLKKNWQNVRCLYIKSTMGKPIRVF.

This sequence belongs to the universal ribosomal protein uL1 family.

This chain is Large ribosomal subunit protein uL1, found in Oryza sativa subsp. indica (Rice).